We begin with the raw amino-acid sequence, 474 residues long: Ribulose bisphosphate carboxylase large chain (474 aa).

2 residues coordinate substrate: N123 and T173. K175 serves as the catalytic Proton acceptor. A substrate-binding site is contributed by K177. Residues K201, D203, and E204 each contribute to the Mg(2+) site. Position 201 is an N6-carboxylysine (K201). The active-site Proton acceptor is the H293. Substrate is bound by residues R294, H326, and S378.

The protein belongs to the RuBisCO large chain family. Type I subfamily. Heterohexadecamer of 8 large chains and 8 small chains; disulfide-linked. The disulfide link is formed within the large subunit homodimers. Requires Mg(2+) as cofactor. In terms of processing, the disulfide bond which can form in the large chain dimeric partners within the hexadecamer appears to be associated with oxidative stress and protein turnover.

It localises to the carboxysome. The enzyme catalyses 2 (2R)-3-phosphoglycerate + 2 H(+) = D-ribulose 1,5-bisphosphate + CO2 + H2O. It catalyses the reaction D-ribulose 1,5-bisphosphate + O2 = 2-phosphoglycolate + (2R)-3-phosphoglycerate + 2 H(+). RuBisCO catalyzes two reactions: the carboxylation of D-ribulose 1,5-bisphosphate, the primary event in carbon dioxide fixation, as well as the oxidative fragmentation of the pentose substrate in the photorespiration process. Both reactions occur simultaneously and in competition at the same active site. This chain is Ribulose bisphosphate carboxylase large chain, found in Synechococcus sp.